The following is a 432-amino-acid chain: 3-oxo-tetronate kinase (432 aa).

Residues H155, S272, A324, G344, E348, 370 to 373 (GGET), and G414 each bind ATP.

This sequence belongs to the four-carbon acid sugar kinase family.

It catalyses the reaction 3-dehydro-L-erythronate + ATP = 3-dehydro-4-O-phospho-L-erythronate + ADP + H(+). The catalysed reaction is 3-dehydro-D-erythronate + ATP = 3-dehydro-4-O-phospho-D-erythronate + ADP + H(+). Catalyzes the ATP-dependent phosphorylation of 3-oxo-tetronate to 3-oxo-tetronate 4-phosphate. This chain is 3-oxo-tetronate kinase, found in Cupriavidus necator (strain ATCC 17699 / DSM 428 / KCTC 22496 / NCIMB 10442 / H16 / Stanier 337) (Ralstonia eutropha).